Consider the following 321-residue polypeptide: Lipoyl synthase (321 aa).

[4Fe-4S] cluster contacts are provided by C68, C73, C79, C94, C98, C101, and S308. One can recognise a Radical SAM core domain in the interval 80–297 (FNHGTATFMI…KAEALAMGFT (218 aa)).

This sequence belongs to the radical SAM superfamily. Lipoyl synthase family. [4Fe-4S] cluster is required as a cofactor.

Its subcellular location is the cytoplasm. The catalysed reaction is [[Fe-S] cluster scaffold protein carrying a second [4Fe-4S](2+) cluster] + N(6)-octanoyl-L-lysyl-[protein] + 2 oxidized [2Fe-2S]-[ferredoxin] + 2 S-adenosyl-L-methionine + 4 H(+) = [[Fe-S] cluster scaffold protein] + N(6)-[(R)-dihydrolipoyl]-L-lysyl-[protein] + 4 Fe(3+) + 2 hydrogen sulfide + 2 5'-deoxyadenosine + 2 L-methionine + 2 reduced [2Fe-2S]-[ferredoxin]. It functions in the pathway protein modification; protein lipoylation via endogenous pathway; protein N(6)-(lipoyl)lysine from octanoyl-[acyl-carrier-protein]: step 2/2. In terms of biological role, catalyzes the radical-mediated insertion of two sulfur atoms into the C-6 and C-8 positions of the octanoyl moiety bound to the lipoyl domains of lipoate-dependent enzymes, thereby converting the octanoylated domains into lipoylated derivatives. The sequence is that of Lipoyl synthase from Salmonella typhi.